The chain runs to 385 residues: Suppressor protein STP22 of temperature-sensitive alpha-factor receptor and arginine permease (385 aa).

Residues 12 to 161 (AVVNWLFKVI…LHEPPQDQAP (150 aa)) form the UEV domain. A disordered region spans residues 155–219 (PPQDQAPSLP…DMDNTDISPT (65 aa)). The span at 168–177 (NTQLQQEQNT) shows a compositional bias: polar residues. The segment covering 178–201 (PPLPPKPKSPHLKPPLPPPPPPQP) has biased composition (pro residues). A coiled-coil region spans residues 272–300 (LRAVEQAIEQTMHSLNAQIDVLTANRAKV). The SB domain occupies 322–385 (TDGLNQLYNL…HIQRITSPLS (64 aa)).

It belongs to the ubiquitin-conjugating enzyme family. UEV subfamily. Component of the ESCRT-I complex (endosomal sorting complex required for transport I) which consists of STP22, VPS28, SRN2 and MVB12 in a 1:1:1:1 stoichiometry. Interacts with HSE1 and VPS27. Interacts with MVB12 and SRN2.

It localises to the cytoplasm. Its subcellular location is the endosome. The protein resides in the late endosome membrane. Functionally, component of the ESCRT-I complex, a regulator of vesicular trafficking process. Binds to ubiquitinated cargo proteins and is required for the sorting of endocytic ubiquitinated cargos into multivesicular bodies (MVBs). Mediates the association to the ESCRT-0 complex. Required for vacuolar targeting of temperature-sensitive plasma membrane proteins STE2 and CAN1. The protein is Suppressor protein STP22 of temperature-sensitive alpha-factor receptor and arginine permease (STP22) of Saccharomyces cerevisiae (strain ATCC 204508 / S288c) (Baker's yeast).